The sequence spans 329 residues: Phosphate acyltransferase (329 aa).

Belongs to the PlsX family. As to quaternary structure, homodimer. Probably interacts with PlsY.

It is found in the cytoplasm. It carries out the reaction a fatty acyl-[ACP] + phosphate = an acyl phosphate + holo-[ACP]. The protein operates within lipid metabolism; phospholipid metabolism. Its function is as follows. Catalyzes the reversible formation of acyl-phosphate (acyl-PO(4)) from acyl-[acyl-carrier-protein] (acyl-ACP). This enzyme utilizes acyl-ACP as fatty acyl donor, but not acyl-CoA. This is Phosphate acyltransferase from Campylobacter fetus subsp. fetus (strain 82-40).